Consider the following 236-residue polypeptide: MKKPLLLTLLCMILAGCDNPKSPESFTPEMASFSNEFDFDPLRGPVKDFSQTLMSENGEVAKQVTGTLSQEGCFDTLELHDLENNTGLALVLDANYYRDAQTLEKKVQLQGKCQLAALPSAGVTWETDDNGFVVSATGKEMKVEYRYDSEGYPLGKTTINSQNTLSVTAKLSTDSRKKLDYTAVSRVDDRQVGNVTQSCEYDAYANPVDCRLVIVDESVKPAVSHHYTIKNRIDYY.

Residues 1 to 16 (MKKPLLLTLLCMILAG) form the signal peptide. A lipid anchor (N-palmitoyl cysteine) is attached at Cys17. A lipid anchor (S-diacylglycerol cysteine) is attached at Cys17.

It belongs to the UPF0257 family.

Its subcellular location is the cell membrane. In Salmonella typhi, this protein is UPF0257 lipoprotein YnfC.